We begin with the raw amino-acid sequence, 76 residues long: Kappa-actitoxin-Avd4g (76 aa).

Positions 1–19 are cleaved as a signal peptide; the sequence is MNKALFLCLVVLCAAVVFA. Residues 20-31 constitute a propeptide that is removed on maturation; it reads AEDLQKAKHAPF. 3 disulfides stabilise this stretch: cysteine 37-cysteine 72, cysteine 39-cysteine 65, and cysteine 55-cysteine 73.

The protein belongs to the sea anemone type 3 (BDS) potassium channel toxin family. Moderately expressed in the ectodermal tissue from the distal and proximal tentacles, body wall, and oral disk.

It localises to the secreted. It is found in the nematocyst. Functionally, blocks Kv3 voltage-gated potassium channels. Reduces blood pressure. This is Kappa-actitoxin-Avd4g from Anemonia viridis (Snakelocks anemone).